We begin with the raw amino-acid sequence, 294 residues long: Nucleotide-binding protein LCA_0526 (294 aa).

ATP is bound at residue Gly-12–Thr-19. Asp-62–Ser-65 contacts GTP.

It belongs to the RapZ-like family.

Functionally, displays ATPase and GTPase activities. This chain is Nucleotide-binding protein LCA_0526, found in Latilactobacillus sakei subsp. sakei (strain 23K) (Lactobacillus sakei subsp. sakei).